Here is a 178-residue protein sequence, read N- to C-terminus: Caveolin-1 (178 aa).

S2 is modified (N-acetylserine). S2 carries the phosphoserine modification. A required for homooligomerization region spans residues 2 to 94; the sequence is SGGKYVDSEG…WKASFTTFTV (93 aa). Over 2–104 the chain is Cytoplasmic; that stretch reads SGGKYVDSEG…TKYWFYRLLS (103 aa). K5 is modified (N6-acetyllysine; alternate). K5 participates in a covalent cross-link: Glycyl lysine isopeptide (Lys-Gly) (interchain with G-Cter in ubiquitin); alternate. Y6 is subject to Phosphotyrosine. S9 bears the Phosphoserine mark. Position 14 is a phosphotyrosine; by ABL1 (Y14). Y25 carries the phosphotyrosine modification. Residues K26, K30, K39, K47, and K57 each participate in a glycyl lysine isopeptide (Lys-Gly) (interchain with G-Cter in ubiquitin) cross-link. An interaction with CAVIN3 region spans residues 82–94; the sequence is DGIWKASFTTFTV. Positions 105–125 form an intramembrane region, helical; that stretch reads ALFGIPMALIWGIYFAILSFL. Residues 126 to 178 lie on the Cytoplasmic side of the membrane; the sequence is HIWAVVPCIKSFLIEIQCISRVYSIYVHTFCDPLFEAIGKIFSNIRINTQKEI. The interacts with SPRY1, SPRY2, SPRY3 and SPRY4 stretch occupies residues 131 to 142; the sequence is VPCIKSFLIEIQ. Residues C133, C143, and C156 are each lipidated (S-palmitoyl cysteine). Residues 149–160 are interacts with SPRY1, SPRY2, and SPRY4; the sequence is SIYVHTFCDPLF. The tract at residues 167 to 178 is interacts with SPRY1, SPRY2, SPRY3 and SPRY4; it reads FSNIRINTQKEI.

This sequence belongs to the caveolin family. In terms of assembly, homooligomer. Interacts with GLIPR2. Interacts with NOSTRIN. Interacts with SNAP25 and STX1A. Interacts (via the N-terminus) with DPP4; the interaction is direct. Interacts with CTNNB1, CDH1 and JUP. Interacts with PACSIN2; this interaction induces membrane tubulation. Interacts with SLC7A9. Interacts with BMX and BTK. Interacts with TGFBR1. Interacts with CAVIN3 (via leucine-zipper domain) in a cholesterol-sensitive manner. Interacts with CAVIN1. Interacts with EHD2 in a cholesterol-dependent manner. Forms a ternary complex with UBXN6 and VCP; mediates CAV1 targeting to lysosomes for degradation. Interacts with ABCG1; this interaction regulates ABCG1-mediated cholesterol efflux. Interacts with NEU3; this interaction enhances NEU3 sialidase activity within caveola. Interacts (via C-terminus) with SPRY1, SPRY2 (via C-terminus), SPRY3, and SPRY4. Interacts with IGFBP5; this interaction allows trafficking of IGFBP5 from the plasma membrane to the nucleus. In terms of processing, phosphorylated at Tyr-14 by ABL1 in response to oxidative stress. Post-translationally, ubiquitinated. Undergo monoubiquitination and multi- and/or polyubiquitination. Monoubiquitination of N-terminal lysines promotes integration in a ternary complex with UBXN6 and VCP which promotes oligomeric CAV1 targeting to lysosomes for degradation. Ubiquitinated by ZNRF1; leading to degradation and modulation of the TLR4-mediated immune response.

It localises to the golgi apparatus membrane. The protein resides in the cell membrane. The protein localises to the membrane. Its subcellular location is the caveola. It is found in the membrane raft. In terms of biological role, may act as a scaffolding protein within caveolar membranes. Forms a stable heterooligomeric complex with CAV2 that targets to lipid rafts and drives caveolae formation. Mediates the recruitment of CAVIN proteins (CAVIN1/2/3/4) to the caveolae. Interacts directly with G-protein alpha subunits and can functionally regulate their activity. Involved in the costimulatory signal essential for T-cell receptor (TCR)-mediated T-cell activation. Its binding to DPP4 induces T-cell proliferation and NF-kappa-B activation in a T-cell receptor/CD3-dependent manner. Recruits CTNNB1 to caveolar membranes and may regulate CTNNB1-mediated signaling through the Wnt pathway. Negatively regulates TGFB1-mediated activation of SMAD2/3 by mediating the internalization of TGFBR1 from membrane rafts leading to its subsequent degradation. Binds 20(S)-hydroxycholesterol (20(S)-OHC). This Bos taurus (Bovine) protein is Caveolin-1 (CAV1).